We begin with the raw amino-acid sequence, 465 residues long: Ran-binding protein 3-like (465 aa).

Positions 276–417 (SQPSRKCLLE…ALQSFNKQRD (142 aa)) constitute a RanBD1 domain.

As to quaternary structure, interacts with SMAD1, SMAD5 and SMAD8; the interaction (with SMAD at least) increases when SMAD1 is not phosphorylated and mediates SMAD1 nuclear export.

The protein localises to the nucleus. It is found in the cytoplasm. Its function is as follows. Nuclear export factor for BMP-specific SMAD1/5/8 that plays a critical role in terminating BMP signaling and regulating mesenchymal stem cell differentiation by blocking osteoblast differentiation to promote myogenic differention. Directly recognizes dephosphorylated SMAD1/5/8 and mediates their nuclear export in a Ran-dependent manner. The chain is Ran-binding protein 3-like (RANBP3L) from Homo sapiens (Human).